Consider the following 458-residue polypeptide: Adenylosuccinate synthetase (458 aa).

GTP contacts are provided by residues 17–23 (GDEGKGK) and 45–47 (GHT). The active-site Proton acceptor is the Asp-18. Residues Asp-18 and Gly-45 each contribute to the Mg(2+) site. Residues 18 to 21 (DEGK), 43 to 46 (NAGH), Thr-137, Arg-151, Gln-247, Thr-262, and Arg-330 each bind IMP. His-46 serves as the catalytic Proton donor. 326 to 332 (VTTGRSR) contacts substrate. Residues Arg-332, 358–360 (KLD), and 440–442 (STS) contribute to the GTP site.

The protein belongs to the adenylosuccinate synthetase family. In terms of assembly, homodimer. It depends on Mg(2+) as a cofactor.

The protein resides in the cytoplasm. It carries out the reaction IMP + L-aspartate + GTP = N(6)-(1,2-dicarboxyethyl)-AMP + GDP + phosphate + 2 H(+). The protein operates within purine metabolism; AMP biosynthesis via de novo pathway; AMP from IMP: step 1/2. In terms of biological role, plays an important role in the de novo pathway of purine nucleotide biosynthesis. Catalyzes the first committed step in the biosynthesis of AMP from IMP. The protein is Adenylosuccinate synthetase of Delftia acidovorans (strain DSM 14801 / SPH-1).